Here is a 275-residue protein sequence, read N- to C-terminus: Glutamate 5-kinase (275 aa).

Position 17 (Lys17) interacts with ATP. Positions 57, 144, and 160 each coordinate substrate. ATP contacts are provided by residues 180–181 (SD) and 222–228 (TGGMLSK).

The protein belongs to the glutamate 5-kinase family.

It localises to the cytoplasm. It carries out the reaction L-glutamate + ATP = L-glutamyl 5-phosphate + ADP. The protein operates within amino-acid biosynthesis; L-proline biosynthesis; L-glutamate 5-semialdehyde from L-glutamate: step 1/2. Catalyzes the transfer of a phosphate group to glutamate to form L-glutamate 5-phosphate. In Streptococcus pyogenes serotype M12 (strain MGAS2096), this protein is Glutamate 5-kinase.